The sequence spans 266 residues: Segregation and condensation protein A (266 aa).

The protein belongs to the ScpA family. Component of a cohesin-like complex composed of ScpA, ScpB and the Smc homodimer, in which ScpA and ScpB bind to the head domain of Smc. The presence of the three proteins is required for the association of the complex with DNA.

It localises to the cytoplasm. Its function is as follows. Participates in chromosomal partition during cell division. May act via the formation of a condensin-like complex containing Smc and ScpB that pull DNA away from mid-cell into both cell halves. The polypeptide is Segregation and condensation protein A (Coxiella burnetii (strain RSA 493 / Nine Mile phase I)).